A 1317-amino-acid chain; its full sequence is ABC transporter C family member 14 (1317 aa).

An ABC transmembrane type-1 1 domain is found at 119–404 (NKYALISNIF…LPEDIYKAIG (286 aa)). The next 5 membrane-spanning stretches (helical) occupy residues 127–147 (IFIT…INYI), 156–176 (SILK…GQSI), 249–269 (ILIL…VGFG), 341–361 (VLFW…VLVS), and 375–395 (LDVT…LIYL). The interval 426–451 (ENNQNINFNNNNNNNNNNKNNNNNDD) is disordered. Residues 427-449 (NNQNINFNNNNNNNNNNKNNNNN) show a composition bias toward low complexity. Positions 490-710 (ENEENIKINE…ISDKNDPNLI (221 aa)) constitute an ABC transporter 1 domain. 522–529 (GVVGSGKT) contacts ATP. Transmembrane regions (helical) follow at residues 734–754 (YFSY…FFIG), 778–798 (DSFY…LLMI), 871–891 (LISI…LFII), 969–989 (LEVM…LFTS), and 992–1012 (GLAA…SWGV). In terms of domain architecture, ABC transmembrane type-1 2 spans 744–1027 (LFITISLFFI…LEVKMNSFQR (284 aa)). The ABC transporter 2 domain occupies 1071–1306 (IEFKNVEIKY…PNSKFNKLIK (236 aa)). 1105–1112 (GRTGAGKT) is a binding site for ATP.

It belongs to the ABC transporter superfamily. ABCC family. Conjugate transporter (TC 3.A.1.208) subfamily.

It localises to the membrane. The chain is ABC transporter C family member 14 (abcC14) from Dictyostelium discoideum (Social amoeba).